A 305-amino-acid chain; its full sequence is Glycine--tRNA ligase alpha subunit (305 aa).

Belongs to the class-II aminoacyl-tRNA synthetase family. Tetramer of two alpha and two beta subunits.

The protein localises to the cytoplasm. The catalysed reaction is tRNA(Gly) + glycine + ATP = glycyl-tRNA(Gly) + AMP + diphosphate. This is Glycine--tRNA ligase alpha subunit from Streptococcus pyogenes serotype M49 (strain NZ131).